Reading from the N-terminus, the 534-residue chain is MLRRRGSPGMGVHVGAALGALWFCLTGALEVQVPEDPVVALVGTDATLCCSFSPEPGFSLAQLNLIWQLTDTKQLVHSFAEGQDQGSAYANRTALFPDLLAQGNASLRLQRVRVADEGSFTCFVSIRDFGSAAVSLQVAAPYSKPSMTLEPNKDLRPGDTVTITCSSYQGYPEAEVFWQDGQGVPLTGNVTTSQMANEQGLFDVHSILRVVLGANGTYSCLVRNPVLQQDAHSSVTITPQRSPTGAVEVQVPEDPVVALVGTDATLRCSFSPEPGFSLAQLNLIWQLTDTKQLVHSFTEGRDQGSAYANRTALFPDLLAQGNASLRLQRVRVADEGSFTCFVSIRDFGSAAVSLQVAAPYSKPSMTLEPNKDLRPGDTVTITCSSYRGYPEAEVFWQDGQGVPLTGNVTTSQMANEQGLFDVHSVLRVVLGANGTYSCLVRNPVLQQDAHGSVTITGQPMTFPPEALWVTVGLSVCLIALLVALAFVCWRKIKQSCEEENAGAEDQDGEGEGSKTALQPLKHSDSKEDDGQEIA.

A signal peptide spans 1 to 28 (MLRRRGSPGMGVHVGAALGALWFCLTGA). In terms of domain architecture, Ig-like V-type 1 spans 29-139 (LEVQVPEDPV…GSAAVSLQVA (111 aa)). Over 29–466 (LEVQVPEDPV…GQPMTFPPEA (438 aa)) the chain is Extracellular. 4 disulfide bridges follow: Cys-50-Cys-122, Cys-165-Cys-220, Cys-268-Cys-340, and Cys-383-Cys-438. Asn-104, Asn-189, Asn-215, Asn-322, Asn-407, and Asn-433 each carry an N-linked (GlcNAc...) asparagine glycan. Residues 145–238 (PSMTLEPNKD…QDAHSSVTIT (94 aa)) enclose the Ig-like C2-type 1 domain. The Ig-like V-type 2 domain occupies 243–357 (PTGAVEVQVP…GSAAVSLQVA (115 aa)). The Ig-like C2-type 2 domain maps to 363–456 (PSMTLEPNKD…QDAHGSVTIT (94 aa)). Residues 467–487 (LWVTVGLSVCLIALLVALAFV) traverse the membrane as a helical segment. The Cytoplasmic portion of the chain corresponds to 488–534 (CWRKIKQSCEEENAGAEDQDGEGEGSKTALQPLKHSDSKEDDGQEIA). Positions 498–510 (EENAGAEDQDGEG) are enriched in acidic residues. Positions 498-534 (EENAGAEDQDGEGEGSKTALQPLKHSDSKEDDGQEIA) are disordered. A Phosphoserine modification is found at Ser-525.

Belongs to the immunoglobulin superfamily. BTN/MOG family. As to quaternary structure, interacts with TREML2 and this interaction enhances T-cell activation. As to expression, ubiquitous but not detectable in peripheral blood lymphocytes or granulocytes. Weakly expressed in resting monocytes. Expressed in dendritic cells derived from monocytes. Expressed in epithelial cells of sinonasal tissue. Expressed in extravillous trophoblast cells and Hofbauer cells of the first trimester placenta and term placenta.

It is found in the membrane. Its function is as follows. May participate in the regulation of T-cell-mediated immune response. May play a protective role in tumor cells by inhibiting natural-killer mediated cell lysis as well as a role of marker for detection of neuroblastoma cells. May be involved in the development of acute and chronic transplant rejection and in the regulation of lymphocytic activity at mucosal surfaces. Could also play a key role in providing the placenta and fetus with a suitable immunological environment throughout pregnancy. Both isoform 1 and isoform 2 appear to be redundant in their ability to modulate CD4 T-cell responses. Isoform 2 is shown to enhance the induction of cytotoxic T-cells and selectively stimulates interferon gamma production in the presence of T-cell receptor signaling. The chain is CD276 antigen (CD276) from Homo sapiens (Human).